Reading from the N-terminus, the 317-residue chain is Homoserine kinase (317 aa).

95–105 lines the ATP pocket; sequence PHSRGLGSSAA.

This sequence belongs to the GHMP kinase family. Homoserine kinase subfamily.

It localises to the cytoplasm. It catalyses the reaction L-homoserine + ATP = O-phospho-L-homoserine + ADP + H(+). The protein operates within amino-acid biosynthesis; L-threonine biosynthesis; L-threonine from L-aspartate: step 4/5. In terms of biological role, catalyzes the ATP-dependent phosphorylation of L-homoserine to L-homoserine phosphate. This chain is Homoserine kinase, found in Mycolicibacterium smegmatis (strain ATCC 700084 / mc(2)155) (Mycobacterium smegmatis).